We begin with the raw amino-acid sequence, 483 residues long: GTPase Der (483 aa).

EngA-type G domains are found at residues 3–167 (FTLA…GEER) and 212–387 (LRIA…EIWN). Residues 9–16 (GRPNVGKS), 56–60 (DTAGL), 119–122 (NKAE), 218–225 (GRPNAGKS), 265–269 (DTAGM), and 330–333 (NKWD) each bind GTP. The KH-like domain maps to 388 to 472 (RRISTGRLNR…PIRLSLRTSD (85 aa)).

It belongs to the TRAFAC class TrmE-Era-EngA-EngB-Septin-like GTPase superfamily. EngA (Der) GTPase family. In terms of assembly, associates with the 50S ribosomal subunit.

Functionally, GTPase that plays an essential role in the late steps of ribosome biogenesis. The polypeptide is GTPase Der (Brucella abortus (strain 2308)).